Reading from the N-terminus, the 703-residue chain is Elongation factor G (703 aa).

Residues 8–290 form the tr-type G domain; sequence ARYRNIGICA…AVIEYLPAPT (283 aa). GTP contacts are provided by residues 17-24, 88-92, and 142-145; these read AHVDAGKT, DTPGH, and NKMD.

The protein belongs to the TRAFAC class translation factor GTPase superfamily. Classic translation factor GTPase family. EF-G/EF-2 subfamily.

Its subcellular location is the cytoplasm. In terms of biological role, catalyzes the GTP-dependent ribosomal translocation step during translation elongation. During this step, the ribosome changes from the pre-translocational (PRE) to the post-translocational (POST) state as the newly formed A-site-bound peptidyl-tRNA and P-site-bound deacylated tRNA move to the P and E sites, respectively. Catalyzes the coordinated movement of the two tRNA molecules, the mRNA and conformational changes in the ribosome. This Teredinibacter turnerae (strain ATCC 39867 / T7901) protein is Elongation factor G.